The sequence spans 232 residues: 2,3,4,5-tetrahydropyridine-2,6-dicarboxylate N-acetyltransferase (232 aa).

This sequence belongs to the transferase hexapeptide repeat family. DapH subfamily.

The enzyme catalyses (S)-2,3,4,5-tetrahydrodipicolinate + acetyl-CoA + H2O = L-2-acetamido-6-oxoheptanedioate + CoA. The protein operates within amino-acid biosynthesis; L-lysine biosynthesis via DAP pathway; LL-2,6-diaminopimelate from (S)-tetrahydrodipicolinate (acetylase route): step 1/3. In terms of biological role, catalyzes the transfer of an acetyl group from acetyl-CoA to tetrahydrodipicolinate. The chain is 2,3,4,5-tetrahydropyridine-2,6-dicarboxylate N-acetyltransferase from Streptococcus suis (strain 98HAH33).